We begin with the raw amino-acid sequence, 301 residues long: Ubiquitin thioesterase OTU1 (301 aa).

Positions 5-83 are UBX-like; the sequence is RCKAKNGTHL…IVEEEKNKPK (79 aa). The OTU domain occupies 102–227; the sequence is VERRVVPADN…GIHYDPLQKV (126 aa). Residues 107-113 form a cys-loop region; that stretch reads VPADNSC. Asp-110 is an active-site residue. Cys-113 serves as the catalytic Nucleophile. Residues 166–176 are variable-loop; it reads IRRDDTWGGAI. The tract at residues 216-220 is his-loop; the sequence is YDGIH. Ile-219 is a substrate binding site. The active site involves His-220. Residues 244–249 form an S2 site region; sequence DVILAQ. The C2H2-type zinc finger occupies 271–295; it reads LRCMVCQTGLVGQKEAREHAKETGH. Residue His-295 is part of the active site.

The protein resides in the cytoplasm. It catalyses the reaction Thiol-dependent hydrolysis of ester, thioester, amide, peptide and isopeptide bonds formed by the C-terminal Gly of ubiquitin (a 76-residue protein attached to proteins as an intracellular targeting signal).. Hydrolase that can remove conjugated ubiquitin from proteins and participates in endoplasmic reticulum-associated degradation (ERAD) for misfolded lumenal proteins. May act by triming the ubiquitin chain on the associated substrate to facilitate their threading through the VCP/p97 pore. Ubiquitin moieties on substrates may present a steric impediment to the threading process when the substrate is transferred to the VCP pore and threaded through VCP's axial channel. Mediates deubiquitination of 'Lys-27'-, 'Lys-29'- and 'Lys-33'-linked polyubiquitin chains. Also able to hydrolyze 'Lys-11'-linked ubiquitin chains. Cleaves both polyubiquitin and di-ubiquitin. In Danio rerio (Zebrafish), this protein is Ubiquitin thioesterase OTU1 (yod1).